Consider the following 70-residue polypeptide: V-type proton ATPase subunit e1 (70 aa).

The next 2 helical transmembrane spans lie at Met1–Val21 and Leu36–Ala56.

Belongs to the V-ATPase e1/e2 subunit family. As to quaternary structure, V-ATPase is a heteromultimeric enzyme composed of a peripheral catalytic V1 complex (components A to H) attached to an integral membrane V0 proton pore complex (components: a, c, c'', d and e).

It localises to the golgi apparatus. The protein localises to the trans-Golgi network membrane. In terms of biological role, subunit of the integral membrane V0 complex of vacuolar ATPase. V-ATPase is responsible for acidifying a variety of intracellular compartments in eukaryotic cells. The polypeptide is V-type proton ATPase subunit e1 (VHA-e1) (Arabidopsis thaliana (Mouse-ear cress)).